The primary structure comprises 400 residues: Opsin-3 (400 aa).

Topologically, residues Met1–Ala38 are extracellular. An N-linked (GlcNAc...) asparagine glycan is attached at Asn5. The chain crosses the membrane as a helical span at residues Tyr39–Leu63. The Cytoplasmic segment spans residues Tyr64–His75. The chain crosses the membrane as a helical span at residues Leu76–Cys100. The Extracellular segment spans residues Leu101–Asp115. Cys112 and Cys186 form a disulfide bridge. The helical transmembrane segment at Gly116–Tyr135 threads the bilayer. Residues Glu136 to Trp151 lie on the Cytoplasmic side of the membrane. Residues Ala152–Asn175 traverse the membrane as a helical segment. Residues Arg176 to Ser199 lie on the Extracellular side of the membrane. Residue Asn196 is glycosylated (N-linked (GlcNAc...) asparagine). Residues Phe200–Val227 form a helical membrane-spanning segment. Residues Arg228–Lys253 lie on the Cytoplasmic side of the membrane. The chain crosses the membrane as a helical span at residues Met254–Val277. Topologically, residues Asn278–Thr285 are extracellular. A helical membrane pass occupies residues Pro286 to Met310. Lys297 is modified (N6-(retinylidene)lysine). The Cytoplasmic segment spans residues Asn311 to Leu400. Cys323 is lipidated: S-palmitoyl cysteine.

This sequence belongs to the G-protein coupled receptor 1 family. Opsin subfamily. In terms of assembly, interacts with MC1R; the interaction results in a decrease in MC1R-mediated cAMP signaling and ultimately a decrease in melanin production in melanocytes. In terms of tissue distribution, expressed in the eye (at protein level). Expressed in tracheal airway smooth muscle. Expressed in brown adipocyte tissue; expression becomes more abundant during differentiation. Strongly expressed in brain. Highly expressed in the preoptic area and paraventricular nucleus of the hypothalamus. Shows highly patterned expression in other regions of the brain, being enriched in selected regions of the cerebral cortex, cerebellar Purkinje cells, a subset of striatal neurons, selected thalamic nuclei, and a subset of interneurons in the ventral horn of the spinal cord.

The protein localises to the cell membrane. The protein resides in the cytoplasm. G-protein coupled receptor which selectively activates G proteins via ultraviolet A (UVA) light-mediated activation in the skin. Binds both 11-cis retinal and all-trans retinal. Regulates melanogenesis in melanocytes via inhibition of alpha-MSH-induced MC1R-mediated cAMP signaling, modulation of calcium flux, regulation of CAMK2 phosphorylation, and subsequently phosphorylation of CREB, p38, ERK and MITF in response to blue light. Plays a role in melanocyte survival through regulation of intracellular calcium levels and subsequent BCL2/RAF1 signaling. Additionally regulates apoptosis via cytochrome c release and subsequent activation of the caspase cascade. Required for TYR and DCT blue light-induced complex formation in melanocytes. Involved in keratinocyte differentiation in response to blue-light. Required for the UVA-mediated induction of calcium and mitogen-activated protein kinase signaling resulting in the expression of MMP1, MMP2, MMP3, MMP9 and TIMP1 in dermal fibroblasts. Plays a role in light-mediated glucose uptake, mitochondrial respiration and fatty acid metabolism in brown adipocyte tissues. May be involved in photorelaxation of airway smooth muscle cells, via blue-light dependent GPCR signaling pathways. This chain is Opsin-3 (Opn3), found in Mus musculus (Mouse).